Here is a 41-residue protein sequence, read N- to C-terminus: Ornatin-A2 (41 aa).

The Cell attachment site signature appears at 33-35; that stretch reads RGD.

Belongs to the ornatin family.

The protein localises to the secreted. Potent inhibitor of fibrinogen interaction with platelet receptors expressed on glycoprotein IIb-IIIa complex. May prevent blood from clotting during either feeding and/or storage of ingested blood. The chain is Ornatin-A2 from Placobdella ornata (Turtle leech).